The chain runs to 629 residues: uncharacterized protein (629 aa).

4 disordered regions span residues 101 to 126, 172 to 209, 315 to 339, and 448 to 468; these read SWKKSSSHPKSKEVSNGLLKVSTPPT, PQKDNQGFSKSKHLSTYEGETENGFSTSTEEEEEEEED, STPKKSFGQTPRIKTELSESPNSQR, and GENTANNGYGPQTLNETSEEP. Acidic residues predominate over residues 200-209; sequence TEEEEEEEED. At serine 334 the chain carries Phosphoserine. Positions 448–463 are enriched in polar residues; sequence GENTANNGYGPQTLNE.

This is an uncharacterized protein from Schizosaccharomyces pombe (strain 972 / ATCC 24843) (Fission yeast).